A 181-amino-acid polypeptide reads, in one-letter code: HGPRTase-like protein 2 (181 aa).

It belongs to the purine/pyrimidine phosphoribosyltransferase family. Archaeal HPRT subfamily.

Its function is as follows. May catalyze a purine salvage reaction, the substrate is unknown. The protein is HGPRTase-like protein 2 of Haloferax volcanii (strain ATCC 29605 / DSM 3757 / JCM 8879 / NBRC 14742 / NCIMB 2012 / VKM B-1768 / DS2) (Halobacterium volcanii).